The primary structure comprises 245 residues: NADH-quinone oxidoreductase subunit C (245 aa).

Residues 1 to 10 (MNAPQDRTDD) are compositionally biased toward basic and acidic residues. Disordered stretches follow at residues 1–54 (MNAP…GYGG) and 217–245 (QRKDYPLGGVPVEYKGAEIPPPDRRRSYQ). Positions 11-28 (GGVPVPVTPAGATGGAPA) are enriched in low complexity. The span at 39 to 54 (GMFGDQGTGDVSGYGG) shows a compositional bias: gly residues.

It belongs to the complex I 30 kDa subunit family. NDH-1 is composed of 14 different subunits. Subunits NuoB, C, D, E, F, and G constitute the peripheral sector of the complex.

The protein localises to the cell membrane. The catalysed reaction is a quinone + NADH + 5 H(+)(in) = a quinol + NAD(+) + 4 H(+)(out). Its function is as follows. NDH-1 shuttles electrons from NADH, via FMN and iron-sulfur (Fe-S) centers, to quinones in the respiratory chain. The immediate electron acceptor for the enzyme in this species is believed to be a menaquinone. Couples the redox reaction to proton translocation (for every two electrons transferred, four hydrogen ions are translocated across the cytoplasmic membrane), and thus conserves the redox energy in a proton gradient. This Salinispora arenicola (strain CNS-205) protein is NADH-quinone oxidoreductase subunit C.